The chain runs to 243 residues: uncharacterized protein (243 aa).

This is an uncharacterized protein from Ureaplasma parvum serovar 3 (strain ATCC 700970).